The chain runs to 210 residues: Putative 3-methyladenine DNA glycosylase (210 aa).

Residues 180 to 210 (SRPPPGAAAARAARAPAAPAPRPRRPRGSGP) are disordered. The span at 186–196 (AAAARAARAPA) shows a compositional bias: low complexity. The segment covering 201-210 (RPRRPRGSGP) has biased composition (basic residues).

Belongs to the DNA glycosylase MPG family.

This is Putative 3-methyladenine DNA glycosylase from Anaeromyxobacter dehalogenans (strain 2CP-1 / ATCC BAA-258).